The chain runs to 204 residues: UPF0637 protein SAB0972c (204 aa).

The protein belongs to the UPF0637 family.

The polypeptide is UPF0637 protein SAB0972c (Staphylococcus aureus (strain bovine RF122 / ET3-1)).